The primary structure comprises 331 residues: Inositol 2-dehydrogenase (331 aa).

This sequence belongs to the Gfo/Idh/MocA family. Homotetramer.

It catalyses the reaction myo-inositol + NAD(+) = scyllo-inosose + NADH + H(+). Functionally, involved in the oxidation of myo-inositol (MI) to 2-keto-myo-inositol (2KMI or 2-inosose). The protein is Inositol 2-dehydrogenase of Renibacterium salmoninarum (strain ATCC 33209 / DSM 20767 / JCM 11484 / NBRC 15589 / NCIMB 2235).